Here is a 155-residue protein sequence, read N- to C-terminus: Ribosomal RNA large subunit methyltransferase H (155 aa).

Residues Leu-73, Gly-104, and 123–128 (LSPLTL) contribute to the S-adenosyl-L-methionine site.

The protein belongs to the RNA methyltransferase RlmH family. In terms of assembly, homodimer.

The protein localises to the cytoplasm. The catalysed reaction is pseudouridine(1915) in 23S rRNA + S-adenosyl-L-methionine = N(3)-methylpseudouridine(1915) in 23S rRNA + S-adenosyl-L-homocysteine + H(+). In terms of biological role, specifically methylates the pseudouridine at position 1915 (m3Psi1915) in 23S rRNA. The chain is Ribosomal RNA large subunit methyltransferase H from Stutzerimonas stutzeri (strain A1501) (Pseudomonas stutzeri).